Here is a 614-residue protein sequence, read N- to C-terminus: Dihydroxy-acid dehydratase (614 aa).

Residue Asp81 participates in Mg(2+) binding. Residue Cys122 participates in [2Fe-2S] cluster binding. The Mg(2+) site is built by Asp123 and Lys124. Position 124 is an N6-carboxylysine (Lys124). Cys193 serves as a coordination point for [2Fe-2S] cluster. Residue Glu489 coordinates Mg(2+). Catalysis depends on Ser515, which acts as the Proton acceptor.

This sequence belongs to the IlvD/Edd family. As to quaternary structure, homodimer. Requires [2Fe-2S] cluster as cofactor. Mg(2+) serves as cofactor.

The catalysed reaction is (2R)-2,3-dihydroxy-3-methylbutanoate = 3-methyl-2-oxobutanoate + H2O. It catalyses the reaction (2R,3R)-2,3-dihydroxy-3-methylpentanoate = (S)-3-methyl-2-oxopentanoate + H2O. The protein operates within amino-acid biosynthesis; L-isoleucine biosynthesis; L-isoleucine from 2-oxobutanoate: step 3/4. It participates in amino-acid biosynthesis; L-valine biosynthesis; L-valine from pyruvate: step 3/4. In terms of biological role, functions in the biosynthesis of branched-chain amino acids. Catalyzes the dehydration of (2R,3R)-2,3-dihydroxy-3-methylpentanoate (2,3-dihydroxy-3-methylvalerate) into 2-oxo-3-methylpentanoate (2-oxo-3-methylvalerate) and of (2R)-2,3-dihydroxy-3-methylbutanoate (2,3-dihydroxyisovalerate) into 2-oxo-3-methylbutanoate (2-oxoisovalerate), the penultimate precursor to L-isoleucine and L-valine, respectively. The protein is Dihydroxy-acid dehydratase of Hahella chejuensis (strain KCTC 2396).